A 234-amino-acid chain; its full sequence is Thrombin-like enzyme acutin (234 aa).

A propeptide is located at residue Met1. The 224-residue stretch at 2 to 225 (VIGGDECDIN…YTDWIQRNIA (224 aa)) folds into the Peptidase S1 domain. Cystine bridges form between Cys8/Cys140, Cys27/Cys43, Cys75/Cys232, Cys119/Cys186, Cys151/Cys165, and Cys176/Cys201. Asn21 carries an N-linked (GlcNAc...) asparagine glycan. Active-site charge relay system residues include His42 and Asp87. The active-site Charge relay system is the Ser180.

Belongs to the peptidase S1 family. Snake venom subfamily. As to quaternary structure, monomer. Expressed by the venom gland.

The protein resides in the secreted. Thrombin-like snake venom serine protease. Has arginyl esterase and fibrinogen clotting activities. The sequence is that of Thrombin-like enzyme acutin from Deinagkistrodon acutus (Hundred-pace snake).